A 72-amino-acid chain; its full sequence is Translation initiation factor IF-1 (72 aa).

In terms of domain architecture, S1-like spans 1-72 (MAKQSAIEKD…SKGRIAFRYK (72 aa)).

This sequence belongs to the IF-1 family. Component of the 30S ribosomal translation pre-initiation complex which assembles on the 30S ribosome in the order IF-2 and IF-3, IF-1 and N-formylmethionyl-tRNA(fMet); mRNA recruitment can occur at any time during PIC assembly.

It localises to the cytoplasm. In terms of biological role, one of the essential components for the initiation of protein synthesis. Stabilizes the binding of IF-2 and IF-3 on the 30S subunit to which N-formylmethionyl-tRNA(fMet) subsequently binds. Helps modulate mRNA selection, yielding the 30S pre-initiation complex (PIC). Upon addition of the 50S ribosomal subunit IF-1, IF-2 and IF-3 are released leaving the mature 70S translation initiation complex. The chain is Translation initiation factor IF-1 from Parabacteroides distasonis (strain ATCC 8503 / DSM 20701 / CIP 104284 / JCM 5825 / NCTC 11152).